A 383-amino-acid polypeptide reads, in one-letter code: MSTWLLPENIADVLPSEARKIEELRRRLLDRFRAYGYEMVMPPLLEYLESLLTGGGRDLNLRTFKLVDQLSGRTLGLRADITPQVARIDAHLLNRQGVTRLCYAGNVLHTRPRGLHATREQIQIGAEIYGHAGLEADLEIQQLMLDALHLAGLGRVRLDLCHAAVLGALVDSEPAAAELGESLYETLAGKDVPLLTELTANLPPVTRDALRALPTLYGDATVLEEARARLPNAPEISRALDDLAFLAQQVGGAEVMIDLADLRGYAYHSGVMFSAYVDGVPNAVARGGRYDKVGQAYGRARAATGFSLDLREVARISPIEARSSAILAPWQAGEALRTSVAALRDAGEVVIQALPGHDHALDEFACDRVLVERDGQWVVELKS.

This sequence belongs to the class-II aminoacyl-tRNA synthetase family. HisZ subfamily. As to quaternary structure, heteromultimer composed of HisG and HisZ subunits.

The protein resides in the cytoplasm. The protein operates within amino-acid biosynthesis; L-histidine biosynthesis; L-histidine from 5-phospho-alpha-D-ribose 1-diphosphate: step 1/9. Its function is as follows. Required for the first step of histidine biosynthesis. May allow the feedback regulation of ATP phosphoribosyltransferase activity by histidine. In Paraburkholderia phymatum (strain DSM 17167 / CIP 108236 / LMG 21445 / STM815) (Burkholderia phymatum), this protein is ATP phosphoribosyltransferase regulatory subunit.